The primary structure comprises 158 residues: uncharacterized protein (158 aa).

The span at 1–18 shows a compositional bias: polar residues; the sequence is MDLASEITSATQTSSLCS. Disordered stretches follow at residues 1–20, 66–94, and 111–158; these read MDLASEITSATQTSSLCSSG, LRDLSRRGSTSSSRSPSRPVSTSASKPCL, and GSSG…GEEF. Residues 72 to 90 are compositionally biased toward low complexity; that stretch reads RGSTSSSRSPSRPVSTSAS. 2 stretches are compositionally biased toward polar residues: residues 111–120 and 149–158; these read GSSGHLQSPG and LSHSAQGEEF.

This is an uncharacterized protein from Homo sapiens (Human).